Here is a 186-residue protein sequence, read N- to C-terminus: UPF0200 protein Hbut_0338 (186 aa).

13-20 is an ATP binding site; the sequence is GMPGSGKS.

This sequence belongs to the UPF0200 family.

This is UPF0200 protein Hbut_0338 from Hyperthermus butylicus (strain DSM 5456 / JCM 9403 / PLM1-5).